Consider the following 220-residue polypeptide: 2-dehydro-3-deoxy-phosphogluconate aldolase (220 aa).

The active-site Proton acceptor is the E48. Residues R52, T76, and K136 each contribute to the pyruvate site. K136 (schiff-base intermediate with substrate) is an active-site residue.

It belongs to the KHG/KDPG aldolase family. Homotrimer.

The catalysed reaction is 2-dehydro-3-deoxy-6-phospho-D-gluconate = D-glyceraldehyde 3-phosphate + pyruvate. The protein operates within carbohydrate acid metabolism; 2-dehydro-3-deoxy-D-gluconate degradation; D-glyceraldehyde 3-phosphate and pyruvate from 2-dehydro-3-deoxy-D-gluconate: step 2/2. Functionally, involved in the degradation of glucose via the Entner-Doudoroff pathway. Catalyzes the reversible, stereospecific retro-aldol cleavage of 2-keto-3-deoxy-6-phosphogluconate (KDPG) to pyruvate and D-glyceraldehyde-3-phosphate. This is 2-dehydro-3-deoxy-phosphogluconate aldolase (eda) from Pseudomonas aeruginosa (strain ATCC 15692 / DSM 22644 / CIP 104116 / JCM 14847 / LMG 12228 / 1C / PRS 101 / PAO1).